A 57-amino-acid chain; its full sequence is uncharacterized protein (57 aa).

This is an uncharacterized protein from Escherichia coli.